A 183-amino-acid chain; its full sequence is RNA pyrophosphohydrolase (183 aa).

A Nudix hydrolase domain is found at glycine 6–glutamate 149. Positions glycine 38–glycine 59 match the Nudix box motif.

Belongs to the Nudix hydrolase family. RppH subfamily. A divalent metal cation serves as cofactor.

Accelerates the degradation of transcripts by removing pyrophosphate from the 5'-end of triphosphorylated RNA, leading to a more labile monophosphorylated state that can stimulate subsequent ribonuclease cleavage. The protein is RNA pyrophosphohydrolase of Thiobacillus denitrificans (strain ATCC 25259 / T1).